The sequence spans 533 residues: Na(+)/H(+) antiporter NhaB (533 aa).

11 helical membrane-spanning segments follow: residues 10 to 30 (IGNFLGNSPKWYKIAILSFLI), 67 to 87 (PGGLLAIQAVAIGMTSASQVL), 96 to 116 (VLLLLVFMVAGIYFMKQLLLF), 131 to 165 (VSLMFCLASAFLSAFLDALTVIAVIITVAVGFYSI), 209 to 229 (LLMHAGVGTALGGVCTMVGEP), 247 to 267 (IRMSPVTVPVLFAGILTCFLV), 310 to 330 (AFVGVWLIAGLALHLASVGLI), 355 to 375 (EEALPFTALLAVFFAVVAVII), 396 to 416 (LVIFYIANGLLSMVSDNVFVG), 454 to 474 (ATPNGQAAFLFLLTSALAPLI), and 481 to 501 (MVWMALPYTIVLSIVGVMAIE).

This sequence belongs to the NhaB Na(+)/H(+) (TC 2.A.34) antiporter family.

It is found in the cell inner membrane. The enzyme catalyses 2 Na(+)(in) + 3 H(+)(out) = 2 Na(+)(out) + 3 H(+)(in). Na(+)/H(+) antiporter that extrudes sodium in exchange for external protons. The protein is Na(+)/H(+) antiporter NhaB of Shewanella sp. (strain MR-4).